A 144-amino-acid chain; its full sequence is Large ribosomal subunit protein uL15 (144 aa).

The segment at 1 to 52 is disordered; it reads MRLNSLSPAEGAKHSAKRLGRGIGSGLGKTGGRGHKGQKSRTGGGVRRGFEG. Residues 21 to 31 are compositionally biased toward gly residues; that stretch reads RGIGSGLGKTG.

This sequence belongs to the universal ribosomal protein uL15 family. In terms of assembly, part of the 50S ribosomal subunit.

Its function is as follows. Binds to the 23S rRNA. This chain is Large ribosomal subunit protein uL15, found in Actinobacillus pleuropneumoniae serotype 5b (strain L20).